A 117-amino-acid polypeptide reads, in one-letter code: Ribosome-binding factor A (117 aa).

It belongs to the RbfA family. In terms of assembly, monomer. Binds 30S ribosomal subunits, but not 50S ribosomal subunits or 70S ribosomes.

The protein localises to the cytoplasm. One of several proteins that assist in the late maturation steps of the functional core of the 30S ribosomal subunit. Associates with free 30S ribosomal subunits (but not with 30S subunits that are part of 70S ribosomes or polysomes). Required for efficient processing of 16S rRNA. May interact with the 5'-terminal helix region of 16S rRNA. This Nitrosomonas europaea (strain ATCC 19718 / CIP 103999 / KCTC 2705 / NBRC 14298) protein is Ribosome-binding factor A.